A 425-amino-acid chain; its full sequence is UDP-N-acetylglucosamine 1-carboxyvinyltransferase (425 aa).

25 to 26 lines the phosphoenolpyruvate pocket; sequence KN. Residue Arg-95 coordinates UDP-N-acetyl-alpha-D-glucosamine. The Proton donor role is filled by Cys-119. Cys-119 is modified (2-(S-cysteinyl)pyruvic acid O-phosphothioketal). UDP-N-acetyl-alpha-D-glucosamine-binding positions include 124–128, Asp-306, and Ile-328; that span reads RPVDQ.

It belongs to the EPSP synthase family. MurA subfamily.

It localises to the cytoplasm. It carries out the reaction phosphoenolpyruvate + UDP-N-acetyl-alpha-D-glucosamine = UDP-N-acetyl-3-O-(1-carboxyvinyl)-alpha-D-glucosamine + phosphate. Its pathway is cell wall biogenesis; peptidoglycan biosynthesis. Its function is as follows. Cell wall formation. Adds enolpyruvyl to UDP-N-acetylglucosamine. The sequence is that of UDP-N-acetylglucosamine 1-carboxyvinyltransferase from Thermus thermophilus (strain ATCC 27634 / DSM 579 / HB8).